The sequence spans 459 residues: Glycosyl hydrolase family 109 protein (459 aa).

A signal peptide (tat-type signal) is located at residues 1-31 (MHNIHRRNFLKAAGAATAGLVTANIALSAYA). NAD(+)-binding positions include 64 to 65 (ER), Asp86, 135 to 138 (WEWH), 155 to 156 (EV), and Asn184. Residues Tyr213, Arg232, 244 to 247 (YPTH), and Tyr326 contribute to the substrate site. Tyr244 provides a ligand contact to NAD(+).

The protein belongs to the Gfo/Idh/MocA family. Glycosyl hydrolase 109 subfamily. Requires NAD(+) as cofactor. Post-translationally, predicted to be exported by the Tat system. The position of the signal peptide cleavage has not been experimentally proven.

Functionally, glycosidase. The sequence is that of Glycosyl hydrolase family 109 protein from Shewanella baltica (strain OS185).